Reading from the N-terminus, the 339-residue chain is Ketol-acid reductoisomerase (NADP(+)) (339 aa).

A KARI N-terminal Rossmann domain is found at 1-182 (MRVYYDRDAD…GGGRSGIIET (182 aa)). NADP(+) contacts are provided by residues 24–27 (YGSQ), R48, S51, S53, and 83–86 (DELQ). H108 is a catalytic residue. G134 contributes to the NADP(+) binding site. Positions 183–328 (TFREECETDL…EKLRAMMPWI (146 aa)) constitute a KARI C-terminal knotted domain. Mg(2+)-binding residues include D191, E195, E227, and E231. A substrate-binding site is contributed by S252.

The protein belongs to the ketol-acid reductoisomerase family. Mg(2+) is required as a cofactor.

The catalysed reaction is (2R)-2,3-dihydroxy-3-methylbutanoate + NADP(+) = (2S)-2-acetolactate + NADPH + H(+). The enzyme catalyses (2R,3R)-2,3-dihydroxy-3-methylpentanoate + NADP(+) = (S)-2-ethyl-2-hydroxy-3-oxobutanoate + NADPH + H(+). The protein operates within amino-acid biosynthesis; L-isoleucine biosynthesis; L-isoleucine from 2-oxobutanoate: step 2/4. Its pathway is amino-acid biosynthesis; L-valine biosynthesis; L-valine from pyruvate: step 2/4. Functionally, involved in the biosynthesis of branched-chain amino acids (BCAA). Catalyzes an alkyl-migration followed by a ketol-acid reduction of (S)-2-acetolactate (S2AL) to yield (R)-2,3-dihydroxy-isovalerate. In the isomerase reaction, S2AL is rearranged via a Mg-dependent methyl migration to produce 3-hydroxy-3-methyl-2-ketobutyrate (HMKB). In the reductase reaction, this 2-ketoacid undergoes a metal-dependent reduction by NADPH to yield (R)-2,3-dihydroxy-isovalerate. The protein is Ketol-acid reductoisomerase (NADP(+)) of Chelativorans sp. (strain BNC1).